Consider the following 417-residue polypeptide: Actin-related protein 10 (417 aa).

Belongs to the actin family. Subunit of dynactin, a multiprotein complex part of a tripartite complex with dynein and a adapter, such as BICDL1, BICD2 or HOOK3. The dynactin complex is built around ACTR1A/ACTB filament and consists of an actin-related filament composed of a shoulder domain, a pointed end and a barbed end. Its length is defined by its flexible shoulder domain. The soulder is composed of 2 DCTN1 subunits, 4 DCTN2 and 2 DCTN3. The 4 DCNT2 (via N-terminus) bind the ACTR1A filament and act as molecular rulers to determine the length. The pointed end is important for binding dynein-dynactin cargo adapters. Consists of 4 subunits: ACTR10, DCNT4, DCTN5 and DCTN6. The barbed end is composed of a CAPZA1:CAPZB heterodimers, which binds ACTR1A/ACTB filament and dynactin and stabilizes dynactin.

The protein localises to the cytoplasm. Its subcellular location is the cytoskeleton. Functionally, part of the dynactin complex that activates the molecular motor dynein for ultra-processive transport along microtubules. The chain is Actin-related protein 10 (ACTR10) from Homo sapiens (Human).